Reading from the N-terminus, the 106-residue chain is Iron-sulfur cluster assembly protein CyaY (106 aa).

This sequence belongs to the frataxin family.

In terms of biological role, involved in iron-sulfur (Fe-S) cluster assembly. May act as a regulator of Fe-S biogenesis. The polypeptide is Iron-sulfur cluster assembly protein CyaY (Salmonella typhimurium (strain LT2 / SGSC1412 / ATCC 700720)).